Consider the following 385-residue polypeptide: GTPase Obg (385 aa).

The 159-residue stretch at 1-159 folds into the Obg domain; it reads MHFIDQAEIE…RRLRLELKLI (159 aa). The OBG-type G domain maps to 160–328; the sequence is AEVGIVGMPN…LLQRVWQCLG (169 aa). Residues 166-173, 191-195, 213-216, 280-283, and 309-311 each bind GTP; these read GMPNAGKS, FTTLQ, DIPG, NKID, and SAV. Residues Ser173 and Thr193 each coordinate Mg(2+).

Belongs to the TRAFAC class OBG-HflX-like GTPase superfamily. OBG GTPase family. In terms of assembly, monomer. Mg(2+) serves as cofactor.

Its subcellular location is the cytoplasm. Its function is as follows. An essential GTPase which binds GTP, GDP and possibly (p)ppGpp with moderate affinity, with high nucleotide exchange rates and a fairly low GTP hydrolysis rate. Plays a role in control of the cell cycle, stress response, ribosome biogenesis and in those bacteria that undergo differentiation, in morphogenesis control. The polypeptide is GTPase Obg (Synechococcus sp. (strain JA-3-3Ab) (Cyanobacteria bacterium Yellowstone A-Prime)).